The sequence spans 153 residues: Histone H2B type W-T (153 aa).

The tract at residues 1-54 is disordered; it reads MATASAMAGPSSETTSEEQLITQEPKEANSTTSQKQSKQRKRGRHGPRRCHSNC. Over residues 11 to 36 the composition is skewed to polar residues; sequence SSETTSEEQLITQEPKEANSTTSQKQ. Residues 37–52 show a composition bias toward basic residues; that stretch reads SKQRKRGRHGPRRCHS.

This sequence belongs to the histone H2B family. In terms of assembly, can replace the conventional histone H2B in the nucleosome. The nucleosome is a histone octamer containing two molecules each of H2A, H2B, H3 and H4 assembled in one H3-H4 heterotetramer and two H2A-H2B heterodimers. The octamer wraps approximately 147 bp of DNA. As to expression, testis-specific (at protein level).

It is found in the nucleus membrane. Its subcellular location is the chromosome. The protein resides in the telomere. Functionally, atypical histone H2B that can form nucleosomes structurally and dynamically indistinguishable from those containing conventional H2B. Nucleosomes wrap and compact DNA into chromatin, limiting DNA accessibility to the cellular machineries which require DNA as a template. Histones thereby play a central role in transcription regulation, DNA repair, DNA replication and chromosomal stability. DNA accessibility is regulated via a complex set of post-translational modifications of histones, also called histone code, and nucleosome remodeling. However, unlike conventional H2B, does not recruit chromosome condensation factors and does not participate in the assembly of mitotic chromosomes. May be important for telomere function and play a role in spermatogenesis. The chain is Histone H2B type W-T from Homo sapiens (Human).